The chain runs to 402 residues: Queuine tRNA-ribosyltransferase-like protein (402 aa).

This sequence belongs to the queuine tRNA-ribosyltransferase family.

This is Queuine tRNA-ribosyltransferase-like protein from Theileria annulata.